An 822-amino-acid chain; its full sequence is Nuclear factor of activated T-cells, cytoplasmic 1 (822 aa).

The calcineurin-binding stretch occupies residues 110 to 115 (PRIEIT). Residues 118 to 210 (LGLHHNNGQF…CVSPKTTDPE (93 aa)) are transactivation domain A (TAD-A). Residues 192-206 (PQTSPWQSPCVSPKT) are compositionally biased toward polar residues. A disordered region spans residues 192–289 (PQTSPWQSPC…HSSPRVSVTD (98 aa)). A run of 2 repeats spans residues 195–211 (SPWQ…DPEE) and 225–241 (SPRH…VTEE). Positions 195–290 (SPWQSPCVSP…SSPRVSVTDD (96 aa)) are 3 X SP repeats. Phosphoserine is present on residues Ser-225 and Ser-229. Over residues 225 to 242 (SPRHSPSTSPRTSVTEES) the composition is skewed to low complexity. Residue Ser-237 is modified to Phosphoserine; by PKA. The Nuclear localization signal motif lies at 257–259 (KRK). Residues 274–290 (SPTPSPHSSPRVSVTDD) form repeat 3. Ser-286 is modified (phosphoserine; by PKA). The short motif at 302–313 (SAIVAAINALST) is the Nuclear export signal element. In terms of domain architecture, RHD spans 400–582 (PSLPALDWQL…NPIECSQRSA (183 aa)). Residues 429–436 (RAHYETEG) mediate DNA binding. A Nuclear localization signal motif is present at residues 672–674 (KRK). The interval 772–822 (GPGHLGLQRPAGGVLGGQEAPRPGGPHPGAPQLHPLNLSQSIVTRLTEPQP) is disordered. The span at 808–822 (NLSQSIVTRLTEPQP) shows a compositional bias: polar residues.

As to quaternary structure, member of the multicomponent NFATC transcription complex that consists of at least two components, a pre-existing cytoplasmic component NFATC2 and an inducible nuclear component NFATC1. Other members such as NFATC4, NFATC3 or members of the activating protein-1 family, MAF, GATA4 and Cbp/p300 can also bind the complex. NFATC proteins bind to DNA as monomers. Interacts with HOMER2 and HOMER3; this interaction may compete with calcineurin/PPP3CA-binding and hence prevent NFATC1 dephosphorylation and activation. Interacts with TLE6/GRG6. Post-translationally, phosphorylated by NFATC-kinase and GSK3B; phosphorylation induces NFATC1 nuclear exit and dephosphorylation by calcineurin promotes nuclear import. Phosphorylation by PKA and DYRK2 negatively modulates nuclear accumulation, and promotes subsequent phosphorylation by GSK3B or casein kinase 1.

It is found in the cytoplasm. The protein localises to the nucleus. Its function is as follows. Plays a role in the inducible expression of cytokine genes in T-cells, especially in the induction of the IL-2 or IL-4 gene transcription. Also controls gene expression in embryonic cardiac cells. Could regulate not only the activation and proliferation but also the differentiation and programmed death of T-lymphocytes as well as lymphoid and non-lymphoid cells. Required for osteoclastogenesis and regulates many genes important for osteoclast differentiation and function. In Sus scrofa (Pig), this protein is Nuclear factor of activated T-cells, cytoplasmic 1 (NFATC1).